A 113-amino-acid polypeptide reads, in one-letter code: Ribosome-binding factor A (113 aa).

This sequence belongs to the RbfA family. As to quaternary structure, monomer. Binds 30S ribosomal subunits, but not 50S ribosomal subunits or 70S ribosomes.

It is found in the cytoplasm. Functionally, one of several proteins that assist in the late maturation steps of the functional core of the 30S ribosomal subunit. Associates with free 30S ribosomal subunits (but not with 30S subunits that are part of 70S ribosomes or polysomes). Required for efficient processing of 16S rRNA. May interact with the 5'-terminal helix region of 16S rRNA. This Lactococcus lactis subsp. cremoris (Streptococcus cremoris) protein is Ribosome-binding factor A.